Reading from the N-terminus, the 112-residue chain is uncharacterized protein (112 aa).

The protein resides in the plastid. The protein localises to the chloroplast. This is an uncharacterized protein from Chlamydomonas reinhardtii (Chlamydomonas smithii).